We begin with the raw amino-acid sequence, 182 residues long: MAHCDFVTNSLIQNATATLHTNRGDIKVALFGNHVPKTVANFVGLAQGTKEYSTQNASGGPSGPFYDGAVFHRVIQGFMIQGGDPTGTGRGGPGYKFADEFHPELQFDKPYLLAMANAGPGTNGSQFFITVGETPHLNRRHTIFGEVTDPDSQKVVDAISTTATDGNDRPTEPVVIDSITIS.

One can recognise a PPIase cyclophilin-type domain in the interval 13-181; that stretch reads QNATATLHTN…EPVVIDSITI (169 aa). A disordered region spans residues 161–182; that stretch reads TTATDGNDRPTEPVVIDSITIS.

It belongs to the cyclophilin-type PPIase family.

The protein localises to the cytoplasm. It carries out the reaction [protein]-peptidylproline (omega=180) = [protein]-peptidylproline (omega=0). Functionally, PPIases accelerate the folding of proteins. It catalyzes the cis-trans isomerization of proline imidic peptide bonds in oligopeptides. The polypeptide is Probable peptidyl-prolyl cis-trans isomerase A (ppiA) (Mycobacterium leprae (strain TN)).